Consider the following 126-residue polypeptide: Small ribosomal subunit protein uS12 (126 aa).

The tract at residues 1-26 (MPTINQLVRKGRASETTKSKSPALQD) is disordered. Residue aspartate 89 is modified to 3-methylthioaspartic acid. The segment at 103-126 (DTQGVKDRKQARSKYGAKRAKAGK) is disordered. A compositionally biased stretch (basic residues) spans 113 to 126 (ARSKYGAKRAKAGK).

This sequence belongs to the universal ribosomal protein uS12 family. As to quaternary structure, part of the 30S ribosomal subunit. Contacts proteins S8 and S17. May interact with IF1 in the 30S initiation complex.

Functionally, with S4 and S5 plays an important role in translational accuracy. In terms of biological role, interacts with and stabilizes bases of the 16S rRNA that are involved in tRNA selection in the A site and with the mRNA backbone. Located at the interface of the 30S and 50S subunits, it traverses the body of the 30S subunit contacting proteins on the other side and probably holding the rRNA structure together. The combined cluster of proteins S8, S12 and S17 appears to hold together the shoulder and platform of the 30S subunit. The polypeptide is Small ribosomal subunit protein uS12 (Paraburkholderia xenovorans (strain LB400)).